The primary structure comprises 518 residues: MDVIGRQHLRQMWDDLAEVYDKKTALIFESAQGKVRQFSYSELNEEINRAANLFHACGIKKGDHVALHLDNCPEFFFCWFGLAKIGAVMVPINARFMYEESAWIINHCQAHFVVTSDNFSPIYQPMLHDKHSPLTQLFLITENCLPTEQGVVDFLSEKAKHPVTLNHHTPLSVDDTAEILFTSGTTSQPKGVVITHYNLRFAGYYSSWQNALREDDIYLTVMPAFHIDCQCTASLPAFSVGATFVLLEKYSARAFWKQILKYQATVTECIPMMMRTLMAQPVSPDEKQHKLREVMFYLNLADEEKDAFIERFNVRLLTSYGMTETIVGLIGDRPGDKRRWPSIGRPGFCYQAQIRDKQNQQVPNGVVGEICVKGEPGKTLFKEYYNRPDATEKALEPDGWLHTGDYGYQDDEGFFYFVDRSCNMIKRGGENVSCIEIENIIASHPKIQDVAVIGVPDDIRDEAIKAFVVLVDGETLSEEAFFAFCEQNMAKFKVPSAVEFKQGLPRNCSGKVIKKHLQ.

It belongs to the ATP-dependent AMP-binding enzyme family.

The catalysed reaction is 4-(trimethylamino)butanoate + ATP + CoA = 4-(trimethylamino)butanoyl-CoA + AMP + diphosphate. It catalyses the reaction crotonobetaine + ATP + CoA = crotonobetainyl-CoA + AMP + diphosphate. It carries out the reaction (R)-carnitine + ATP + CoA = (R)-carnitinyl-CoA + AMP + diphosphate. Its pathway is amine and polyamine metabolism; carnitine metabolism. Catalyzes the transfer of CoA to carnitine, generating the initial carnitinyl-CoA needed for the CaiB reaction cycle. Also has activity toward crotonobetaine and gamma-butyrobetaine. This chain is Crotonobetaine/carnitine--CoA ligase, found in Proteus mirabilis (strain HI4320).